A 1073-amino-acid chain; its full sequence is Lon protease homolog, mitochondrial (1073 aa).

The transit peptide at 1 to 27 (MIKASKCNKARALFLVRTSIPRTFIRN) directs the protein to the mitochondrion. Composition is skewed to basic and acidic residues over residues 69 to 107 (FDSK…RKDI) and 113 to 123 (YDIKEETDSKP). The segment at 69–173 (FDSKKEKQPS…DKEFLSPSDA (105 aa)) is disordered. Over residues 132–150 (SSKSSISSSSGGANNNNNN) the composition is skewed to low complexity. Basic and acidic residues predominate over residues 158 to 167 (DDGSPKDKEF). The Lon N-terminal domain occupies 177–395 (PPFLAIAMKD…LSLQLLQVEA (219 aa)). 543–550 (GPPGTGKT) lines the ATP pocket. Basic and acidic residues predominate over residues 775 to 785 (SVISDKAKKDA). The segment at 775–821 (SVISDKAKKDAGSSSIESNDSNTEAKVSTTTENEKKQEQKQKQDEEI) is disordered. Residues 790-805 (IESNDSNTEAKVSTTT) are compositionally biased toward polar residues. Basic and acidic residues predominate over residues 806 to 821 (ENEKKQEQKQKQDEEI). Residues 856 to 1044 (TLNPGVATGL…SEVFEHLFKG (189 aa)) form the Lon proteolytic domain. Catalysis depends on residues serine 950 and lysine 993.

This sequence belongs to the peptidase S16 family. As to quaternary structure, homohexamer or homoheptamer. Organized in a ring with a central cavity.

The protein localises to the mitochondrion matrix. It carries out the reaction Hydrolysis of proteins in presence of ATP.. In terms of biological role, ATP-dependent serine protease that mediates the selective degradation of misfolded, unassembled or oxidatively damaged polypeptides as well as certain short-lived regulatory proteins in the mitochondrial matrix. May also have a chaperone function in the assembly of inner membrane protein complexes. Participates in the regulation of mitochondrial gene expression and in the maintenance of the integrity of the mitochondrial genome. Binds to mitochondrial DNA in a site-specific manner. In Candida dubliniensis (strain CD36 / ATCC MYA-646 / CBS 7987 / NCPF 3949 / NRRL Y-17841) (Yeast), this protein is Lon protease homolog, mitochondrial.